The following is a 39-amino-acid chain: Photosystem II reaction center protein L (39 aa).

A helical transmembrane segment spans residues 18–38; sequence SLYLGLLLVAVLGILFSSYFF.

It belongs to the PsbL family. PSII is composed of 1 copy each of membrane proteins PsbA, PsbB, PsbC, PsbD, PsbE, PsbF, PsbH, PsbI, PsbJ, PsbK, PsbL, PsbM, PsbT, PsbX, PsbY, PsbZ, Psb30/Ycf12, peripheral proteins PsbO, CyanoQ (PsbQ), PsbU, PsbV and a large number of cofactors. It forms dimeric complexes.

It localises to the cellular thylakoid membrane. Functionally, one of the components of the core complex of photosystem II (PSII). PSII is a light-driven water:plastoquinone oxidoreductase that uses light energy to abstract electrons from H(2)O, generating O(2) and a proton gradient subsequently used for ATP formation. It consists of a core antenna complex that captures photons, and an electron transfer chain that converts photonic excitation into a charge separation. This subunit is found at the monomer-monomer interface and is required for correct PSII assembly and/or dimerization. The sequence is that of Photosystem II reaction center protein L from Microcystis aeruginosa (strain NIES-843 / IAM M-2473).